Here is a 535-residue protein sequence, read N- to C-terminus: Ribonuclease Y (535 aa).

The chain crosses the membrane as a helical span at residues isoleucine 4–isoleucine 24. The disordered stretch occupies residues glutamate 118–isoleucine 141. The KH domain occupies threonine 225–leucine 285. An HD domain is found at valine 351 to alanine 444.

This sequence belongs to the RNase Y family.

It is found in the cell membrane. Endoribonuclease that initiates mRNA decay. This is Ribonuclease Y from Streptococcus pyogenes serotype M1.